Reading from the N-terminus, the 245-residue chain is Uridylate kinase (245 aa).

Residue 16–19 (KLSG) participates in ATP binding. Glycine 58 serves as a coordination point for UMP. Glycine 59 and arginine 63 together coordinate ATP. UMP-binding positions include aspartate 78 and 139 to 146 (TGNPFFTT). ATP contacts are provided by threonine 166, tyrosine 172, and aspartate 175.

Belongs to the UMP kinase family. In terms of assembly, homohexamer.

It localises to the cytoplasm. The enzyme catalyses UMP + ATP = UDP + ADP. It participates in pyrimidine metabolism; CTP biosynthesis via de novo pathway; UDP from UMP (UMPK route): step 1/1. With respect to regulation, inhibited by UTP. Its function is as follows. Catalyzes the reversible phosphorylation of UMP to UDP. This chain is Uridylate kinase, found in Idiomarina loihiensis (strain ATCC BAA-735 / DSM 15497 / L2-TR).